We begin with the raw amino-acid sequence, 367 residues long: Carbohydrate sulfotransferase 14 (367 aa).

Over 1–34 the chain is Cytoplasmic; sequence MPPRKKEYGIKRASGSLVHFRAPVSATTIRRHSA. A helical; Signal-anchor for type II membrane protein membrane pass occupies residues 35-55; it reads VVPSVLTFAVIVASGGLLLMI. At 56–367 the chain is on the lumenal side; that stretch reads EKGMLNSVQT…PNTTTEYCRH (312 aa). N-linked (GlcNAc...) asparagine glycosylation is present at N99. 3'-phosphoadenylyl sulfate contacts are provided by residues 144–150 and 202–210; these read PKVACSN and REPMARLLS. N-linked (GlcNAc...) asparagine glycosylation occurs at N359.

This sequence belongs to the sulfotransferase 2 family.

The protein resides in the golgi apparatus membrane. Its function is as follows. Catalyzes the transfer of sulfate to position 4 of the N-acetylgalactosamine (GalNAc) residue of dermatan sulfate. This is Carbohydrate sulfotransferase 14 (chst14) from Danio rerio (Zebrafish).